Reading from the N-terminus, the 235-residue chain is Phosphoribosylaminoimidazole-succinocarboxamide synthase (235 aa).

Belongs to the SAICAR synthetase family.

The enzyme catalyses 5-amino-1-(5-phospho-D-ribosyl)imidazole-4-carboxylate + L-aspartate + ATP = (2S)-2-[5-amino-1-(5-phospho-beta-D-ribosyl)imidazole-4-carboxamido]succinate + ADP + phosphate + 2 H(+). Its pathway is purine metabolism; IMP biosynthesis via de novo pathway; 5-amino-1-(5-phospho-D-ribosyl)imidazole-4-carboxamide from 5-amino-1-(5-phospho-D-ribosyl)imidazole-4-carboxylate: step 1/2. The polypeptide is Phosphoribosylaminoimidazole-succinocarboxamide synthase (Clostridium acetobutylicum (strain ATCC 824 / DSM 792 / JCM 1419 / IAM 19013 / LMG 5710 / NBRC 13948 / NRRL B-527 / VKM B-1787 / 2291 / W)).